A 374-amino-acid chain; its full sequence is U-box domain-containing protein 8 (374 aa).

A U-box domain is found at 4 to 79 (DLPNDFRCPI…LNFAHVSLKE (76 aa)). ARM repeat units follow at residues 126–165 (SSIR…NLSL), 167–206 (DDNK…SLAV), 208–248 (EVNK…ALCS), 250–288 (PDNR…KCRG), and 289–327 (GREE…CLCC).

In terms of tissue distribution, expressed in the whole plant.

It catalyses the reaction S-ubiquitinyl-[E2 ubiquitin-conjugating enzyme]-L-cysteine + [acceptor protein]-L-lysine = [E2 ubiquitin-conjugating enzyme]-L-cysteine + N(6)-ubiquitinyl-[acceptor protein]-L-lysine.. Its pathway is protein modification; protein ubiquitination. Its function is as follows. Functions as an E3 ubiquitin ligase. Involved in the age-dependent pseudo-self-compatibility process. The polypeptide is U-box domain-containing protein 8 (PUB8) (Arabidopsis thaliana (Mouse-ear cress)).